The sequence spans 175 residues: Protein GrpE (175 aa).

The segment at 1 to 35 (MSEQKQEIENENAQNSENLQDDLQDNEKNETNELQ) is disordered. Residues 25–35 (DNEKNETNELQ) show a composition bias toward basic and acidic residues.

This sequence belongs to the GrpE family. Homodimer.

The protein resides in the cytoplasm. In terms of biological role, participates actively in the response to hyperosmotic and heat shock by preventing the aggregation of stress-denatured proteins, in association with DnaK and GrpE. It is the nucleotide exchange factor for DnaK and may function as a thermosensor. Unfolded proteins bind initially to DnaJ; upon interaction with the DnaJ-bound protein, DnaK hydrolyzes its bound ATP, resulting in the formation of a stable complex. GrpE releases ADP from DnaK; ATP binding to DnaK triggers the release of the substrate protein, thus completing the reaction cycle. Several rounds of ATP-dependent interactions between DnaJ, DnaK and GrpE are required for fully efficient folding. The sequence is that of Protein GrpE from Campylobacter jejuni (strain RM1221).